We begin with the raw amino-acid sequence, 425 residues long: Serine--tRNA ligase (425 aa).

Position 230-232 (230-232 (TAE)) interacts with L-serine. An ATP-binding site is contributed by 261–263 (RSE). Glutamate 284 lines the L-serine pocket. Position 348 to 351 (348 to 351 (EISS)) interacts with ATP. L-serine is bound at residue serine 383.

It belongs to the class-II aminoacyl-tRNA synthetase family. Type-1 seryl-tRNA synthetase subfamily. Homodimer. The tRNA molecule binds across the dimer.

Its subcellular location is the cytoplasm. The enzyme catalyses tRNA(Ser) + L-serine + ATP = L-seryl-tRNA(Ser) + AMP + diphosphate + H(+). It catalyses the reaction tRNA(Sec) + L-serine + ATP = L-seryl-tRNA(Sec) + AMP + diphosphate + H(+). The protein operates within aminoacyl-tRNA biosynthesis; selenocysteinyl-tRNA(Sec) biosynthesis; L-seryl-tRNA(Sec) from L-serine and tRNA(Sec): step 1/1. In terms of biological role, catalyzes the attachment of serine to tRNA(Ser). Is also able to aminoacylate tRNA(Sec) with serine, to form the misacylated tRNA L-seryl-tRNA(Sec), which will be further converted into selenocysteinyl-tRNA(Sec). In Ligilactobacillus salivarius (strain UCC118) (Lactobacillus salivarius), this protein is Serine--tRNA ligase.